Here is a 1605-residue protein sequence, read N- to C-terminus: GTPase-activating protein pac-1 (1605 aa).

The interval 1 to 574 (MEEHHRRLHV…QRFIALFNSS (574 aa)) is required for localization to adherens junctions. 3 disordered regions span residues 293 to 430 (QRHP…ISTS), 529 to 556 (MRSG…LNAP), and 574 to 593 (SKTS…RSRT). Residues 323–334 (SKEDPSEDTGHD) show a composition bias toward basic and acidic residues. 3 stretches are compositionally biased toward low complexity: residues 353 to 365 (RNAS…SSRS), 420 to 430 (TTSSTSSISTS), and 530 to 552 (RSGG…TSRS). The region spanning 599-726 (RFALPGTILQ…WISVLQSSSE (128 aa)) is the PH domain. Polar residues-rich tracts occupy residues 728-745 (GIAT…TTGR) and 846-855 (KNSQLQSPTA). Disordered regions lie at residues 728-752 (GIAT…NAVS) and 846-942 (KNSQ…AGAP). Low complexity predominate over residues 868 to 879 (SSSQTMATTSSS). Positions 908–917 (SGRKWKKSKA) are enriched in basic residues. A compositionally biased stretch (low complexity) spans 928–941 (GSSSGSQQQGAAGA). One can recognise a Rho-GAP domain in the interval 948-1146 (VRIADCPTGS…TLIHYNLWMF (199 aa)). 5 disordered regions span residues 1152-1176 (TEDA…YGVG), 1207-1258 (EGKG…AASV), 1277-1339 (SRQT…RRKR), 1438-1533 (TSDY…ARRH), and 1554-1605 (GIRK…DELL). Basic residues predominate over residues 1211 to 1229 (QKIKNMLRRNSRRDKSKSK). 2 stretches are compositionally biased toward polar residues: residues 1244–1257 (GWTQ…SAAS) and 1278–1300 (RQTV…RLDQ). The segment covering 1301–1312 (SPSLESSLGSLP) has biased composition (low complexity). Residues 1438-1453 (TSDYSTTSSAPLSTNP) show a composition bias toward polar residues. Positions 1461-1476 (DQPNSSSDYASSDPSP) are enriched in low complexity. Polar residues-rich tracts occupy residues 1480–1493 (NPST…SNLA) and 1500–1515 (HATS…MSRS). Basic and acidic residues predominate over residues 1558-1575 (SSPDVSRDEVSDDEKNHQ).

In terms of assembly, associated with the catenin-cadherin complex consisting of hmr-1, hmp-1 and hmp-2; this is mediated by interaction with picc-1.

Its subcellular location is the cytoplasm. It localises to the cell junction. The protein resides in the adherens junction. In terms of biological role, GTPase-activating protein for members of the Rho subfamily including Rac1, RhoA and cdc42 and other Ras-related subfamilies including let-60. Mediates radial (inner-outer) polarity and gastrulation by excluding par-6 from contacted cell surfaces; acts by inactivating cdc42 at inner cell surfaces which limits active cdc42 to outer cell surfaces devoid of cell-cell contacts, where cdc42 can bind and recruit par-6. Required for blastomere polarization. In Caenorhabditis elegans, this protein is GTPase-activating protein pac-1 (pac-1).